The primary structure comprises 193 residues: Ectoine TRAP transporter small permease protein TeaB (193 aa).

4 helical membrane passes run 33-55 (ILAL…RFAL), 65-82 (VNRI…GYAA), 103-125 (RALM…YYSV), and 145-167 (IFII…LFTA).

This sequence belongs to the TRAP transporter small permease family. In terms of assembly, the complex comprises the extracytoplasmic solute receptor protein TeaA, and the two transmembrane proteins TeaB and TeaC.

The protein localises to the cell inner membrane. Part of the tripartite ATP-independent periplasmic (TRAP) transport system TeaABC involved in the uptake of ectoine and hydroxyectoine in response to osmotic upshock. Probably functions as a recovery system for synthesized ectoine that leaks out of the cell. The protein is Ectoine TRAP transporter small permease protein TeaB (teaB) of Halomonas elongata (strain ATCC 33173 / DSM 2581 / NBRC 15536 / NCIMB 2198 / 1H9).